The chain runs to 228 residues: 30 kDa heat shock protein (228 aa).

Disordered stretches follow at residues 34-53, 117-136, and 144-174; these read EVQG…PTRT, KGEP…DVDE, and TATG…APAE. The 180-residue stretch at 49 to 228 folds into the sHSP domain; the sequence is QPTRTFSPKF…KHETIRIAIN (180 aa). The segment covering 144-158 has biased composition (low complexity); it reads TATGANNQNNQQVAQ.

Belongs to the small heat shock protein (HSP20) family.

It localises to the cytoplasm. This Neurospora crassa (strain ATCC 24698 / 74-OR23-1A / CBS 708.71 / DSM 1257 / FGSC 987) protein is 30 kDa heat shock protein (hsp30).